A 181-amino-acid polypeptide reads, in one-letter code: Cytochrome c-type biogenesis protein CcmE (181 aa).

At 1-8 (MNPRRKSR) the chain is on the cytoplasmic side. A helical; Signal-anchor for type II membrane protein membrane pass occupies residues 9–29 (LKVVVLIMFSVAVAAGLTLYA). Residues 30–181 (LSQNIDLFYT…TFNTLQGESK (152 aa)) lie on the Periplasmic side of the membrane. The heme site is built by H131 and Y135.

This sequence belongs to the CcmE/CycJ family.

Its subcellular location is the cell inner membrane. In terms of biological role, heme chaperone required for the biogenesis of c-type cytochromes. Transiently binds heme delivered by CcmC and transfers the heme to apo-cytochromes in a process facilitated by CcmF and CcmH. This Haemophilus ducreyi (strain 35000HP / ATCC 700724) protein is Cytochrome c-type biogenesis protein CcmE.